A 552-amino-acid chain; its full sequence is Elongator complex protein 3 (552 aa).

In terms of domain architecture, Radical SAM core spans 84–374 (RTASGIAVVA…YRVQRDIPMP (291 aa)). The [4Fe-4S] cluster site is built by Cys101, Cys111, and Cys114. Acetyl-CoA-binding positions include Lys166, 476-479 (ELHV), 499-501 (FGM), and Tyr532. Residues 398-552 (TTCRDVRTRE…YMSKSIEENN (155 aa)) form the N-acetyltransferase domain.

This sequence belongs to the ELP3 family. Component of the elongator complex composed of Elp1, Elp2, Elp3, Elp4, Elp5 and Elp6. The elongator complex associates with and stabilizes microtubules; efficient interaction requires the full complex. It depends on [4Fe-4S] cluster as a cofactor.

Its subcellular location is the cytoplasm. It is found in the nucleus. It localises to the cytoskeleton. The protein resides in the spindle. The enzyme catalyses uridine(34) in tRNA + acetyl-CoA + S-adenosyl-L-methionine + H2O = 5-(carboxymethyl)uridine(34) in tRNA + 5'-deoxyadenosine + L-methionine + CoA + 2 H(+). It participates in tRNA modification; 5-methoxycarbonylmethyl-2-thiouridine-tRNA biosynthesis. Its function is as follows. Catalytic tRNA acetyltransferase subunit of the elongator complex, which is required for multiple tRNA modifications, including mcm5U (5-methoxycarbonylmethyl uridine), mcm5s2U (5-methoxycarbonylmethyl-2-thiouridine), and ncm5U (5-carbamoylmethyl uridine). In the elongator complex, acts as a tRNA uridine(34) acetyltransferase by mediating formation of carboxymethyluridine in the wobble base at position 34 in tRNAs. Binding by the elongator complex stabilizes microtubules and promotes their growth. This induces central spindle asymmetry, promoting polarized signaling endosome trafficking during asymmetric cell division and cell fate assignation of sensory organ precursor cells. Plays a role in the control of synaptic bouton expansion. Required for larval development. Involved in protein synthesis-dependent long-term memory formation, probably as part of the elongator complex. This is Elongator complex protein 3 from Drosophila melanogaster (Fruit fly).